A 257-amino-acid polypeptide reads, in one-letter code: Acyl-[acyl-carrier-protein]--UDP-N-acetylglucosamine O-acyltransferase (257 aa).

Belongs to the transferase hexapeptide repeat family. LpxA subfamily. In terms of assembly, homotrimer.

The protein localises to the cytoplasm. It carries out the reaction a (3R)-hydroxyacyl-[ACP] + UDP-N-acetyl-alpha-D-glucosamine = a UDP-3-O-[(3R)-3-hydroxyacyl]-N-acetyl-alpha-D-glucosamine + holo-[ACP]. Its pathway is glycolipid biosynthesis; lipid IV(A) biosynthesis; lipid IV(A) from (3R)-3-hydroxytetradecanoyl-[acyl-carrier-protein] and UDP-N-acetyl-alpha-D-glucosamine: step 1/6. Involved in the biosynthesis of lipid A, a phosphorylated glycolipid that anchors the lipopolysaccharide to the outer membrane of the cell. The protein is Acyl-[acyl-carrier-protein]--UDP-N-acetylglucosamine O-acyltransferase of Anaeromyxobacter sp. (strain Fw109-5).